A 215-amino-acid chain; its full sequence is Protein Thf1 (215 aa).

Residues 182–213 adopt a coiled-coil conformation; that stretch reads ERMDQAVELVEETIAAEKRKKERRLEEQAQRT.

It belongs to the THF1 family.

May be involved in photosynthetic membrane biogenesis. The protein is Protein Thf1 of Synechococcus sp. (strain CC9605).